Here is a 231-residue protein sequence, read N- to C-terminus: NADH-ubiquinone oxidoreductase chain 4 (231 aa).

6 consecutive transmembrane segments (helical) span residues 1–21, 34–54, 61–80, 85–107, 128–148, and 169–189; these read PIAGSMVLAAILLKLGGYGII, MFLPFVVLALWGAILANLTCL, SLIAYSSVSHMGLVVAAIII, GLAGAMTLMIAHGFTSSALFCLA, ILPMATTWWLLTNLMNIAIPP, and TIILLGLSMLITASYSLHMFL.

Belongs to the complex I subunit 4 family.

It localises to the mitochondrion membrane. It catalyses the reaction a ubiquinone + NADH + 5 H(+)(in) = a ubiquinol + NAD(+) + 4 H(+)(out). In terms of biological role, core subunit of the mitochondrial membrane respiratory chain NADH dehydrogenase (Complex I) that is believed to belong to the minimal assembly required for catalysis. Complex I functions in the transfer of electrons from NADH to the respiratory chain. The immediate electron acceptor for the enzyme is believed to be ubiquinone. This chain is NADH-ubiquinone oxidoreductase chain 4 (MT-ND4), found in Gloydius blomhoffii (Mamushi).